The primary structure comprises 485 residues: Alpha,alpha-trehalose-phosphate synthase [UDP-forming] (485 aa).

The D-glucose 6-phosphate site is built by tyrosine 99 and aspartate 153. Arginine 290 and lysine 295 together coordinate UDP. Residues arginine 290 and lysine 295 each contribute to the UDP-alpha-D-glucose site. Residue arginine 328 participates in D-glucose 6-phosphate binding. UDP contacts are provided by residues isoleucine 367 and 393-397 (LVSYE). Residues isoleucine 367 and 389-397 (DGMNLVSYE) each bind UDP-alpha-D-glucose.

It belongs to the glycosyltransferase 20 family.

It catalyses the reaction D-glucose 6-phosphate + UDP-alpha-D-glucose = alpha,alpha-trehalose 6-phosphate + UDP + H(+). It participates in carbohydrate biosynthesis. Synthase catalytic subunit of the trehalose synthase complex that catalyzes the production of trehalose from glucose-6-phosphate and UDP-alpha-D-glucose in a two step process. The polypeptide is Alpha,alpha-trehalose-phosphate synthase [UDP-forming] (Zygosaccharomyces rouxii).